Consider the following 363-residue polypeptide: tRNA N6-adenosine threonylcarbamoyltransferase (363 aa).

Fe cation-binding residues include histidine 127 and histidine 131. Residues 150–154 (LISGG), aspartate 183, glycine 196, and asparagine 290 each bind substrate. Position 318 (aspartate 318) interacts with Fe cation.

This sequence belongs to the KAE1 / TsaD family. It depends on Fe(2+) as a cofactor.

Its subcellular location is the cytoplasm. The catalysed reaction is L-threonylcarbamoyladenylate + adenosine(37) in tRNA = N(6)-L-threonylcarbamoyladenosine(37) in tRNA + AMP + H(+). Its function is as follows. Required for the formation of a threonylcarbamoyl group on adenosine at position 37 (t(6)A37) in tRNAs that read codons beginning with adenine. Is involved in the transfer of the threonylcarbamoyl moiety of threonylcarbamoyl-AMP (TC-AMP) to the N6 group of A37, together with TsaE and TsaB. TsaD likely plays a direct catalytic role in this reaction. In Zymomonas mobilis subsp. mobilis (strain ATCC 31821 / ZM4 / CP4), this protein is tRNA N6-adenosine threonylcarbamoyltransferase.